We begin with the raw amino-acid sequence, 832 residues long: Protein PPP4R3C (832 aa).

The interval 708–832 (RTQEGEAVMP…SPKKKPHLSS (125 aa)) is disordered. Composition is skewed to basic and acidic residues over residues 725-735 (FTETKRTHQEG) and 749-765 (METKRNQEHEGKVDSPK). Low complexity predominate over residues 769 to 779 (SGDFKFSSSYS). Residues 801 to 820 (PDDEEEKEEDEEEKEEDKED) are compositionally biased toward acidic residues.

This sequence belongs to the SMEK family.

In Homo sapiens (Human), this protein is Protein PPP4R3C.